A 59-amino-acid chain; its full sequence is Large ribosomal subunit protein uL30 (59 aa).

It belongs to the universal ribosomal protein uL30 family. As to quaternary structure, part of the 50S ribosomal subunit.

The chain is Large ribosomal subunit protein uL30 from Citrifermentans bemidjiense (strain ATCC BAA-1014 / DSM 16622 / JCM 12645 / Bem) (Geobacter bemidjiensis).